We begin with the raw amino-acid sequence, 608 residues long: Elongation factor 4 (608 aa).

In terms of domain architecture, tr-type G spans serine 11 to lysine 193. GTP contacts are provided by residues aspartate 23 to threonine 28 and asparagine 140 to aspartate 143.

It belongs to the TRAFAC class translation factor GTPase superfamily. Classic translation factor GTPase family. LepA subfamily.

It is found in the cell inner membrane. The enzyme catalyses GTP + H2O = GDP + phosphate + H(+). Its function is as follows. Required for accurate and efficient protein synthesis under certain stress conditions. May act as a fidelity factor of the translation reaction, by catalyzing a one-codon backward translocation of tRNAs on improperly translocated ribosomes. Back-translocation proceeds from a post-translocation (POST) complex to a pre-translocation (PRE) complex, thus giving elongation factor G a second chance to translocate the tRNAs correctly. Binds to ribosomes in a GTP-dependent manner. This Rhizobium meliloti (strain 1021) (Ensifer meliloti) protein is Elongation factor 4.